Consider the following 572-residue polypeptide: Receptor-transporting protein 5 (572 aa).

A 3CxxC-type zinc finger spans residues 52-148; it reads SRLQCGHCPG…AYEGCCEACE (97 aa). Residues 544–560 traverse the membrane as a helical segment; the sequence is FWIWVSMTVCVFWLMCM.

Its subcellular location is the membrane. This Homo sapiens (Human) protein is Receptor-transporting protein 5 (RTP5).